A 248-amino-acid chain; its full sequence is Mannose-binding protein C (248 aa).

A signal peptide spans 1–20; the sequence is MSLFPSLPLLLLSMVAASYS. The Collagen-like domain maps to 42–99; it reads GINGFPGKDGRDGTKGEKGEPGQGLRGLQGPPGKLGPPGNPGPSGSPGPKGQKGDPGK. A disordered region spans residues 43-113; that stretch reads INGFPGKDGR…DSSLAASERK (71 aa). Pro-47 is modified (hydroxyproline). Residues 49–61 are compositionally biased toward basic and acidic residues; it reads KDGRDGTKGEKGE. Hydroxyproline occurs at positions 73, 79, 82, and 88. A compositionally biased stretch (pro residues) spans 75-87; it reads KLGPPGNPGPSGS. Over residues 93-102 the composition is skewed to basic and acidic residues; sequence QKGDPGKSPD. Residues 112–130 adopt a coiled-coil conformation; it reads RKALQTEMARIKKWLTFSL. Positions 134–245 constitute a C-type lectin domain; that stretch reads VGNKFFLTNG…CSTSHLAVCE (112 aa). Cystine bridges form between Cys-155–Cys-244 and Cys-222–Cys-236.

In terms of assembly, oligomeric complex of 3 or more homotrimers. Interacts with MASP1 and MASP2. Interacts with MEP1A and MEP1B and may inhibit their catalytic activity. Interacts with CR1 (via Sushi 24 and Sushi 25 domains). As to quaternary structure, (Microbial infection) Interacts with SARS coronavirus-2/SARS-CoV-2 Spike glycoprotein homotrimer; the interaction is calcium-dependent and modulated by Spike glycoprotein glycosylation state. Plasma protein produced mainly in the liver.

It is found in the secreted. In terms of biological role, calcium-dependent lectin involved in innate immune defense. Binds mannose, fucose and N-acetylglucosamine on different microorganisms and activates the lectin complement pathway. Binds to late apoptotic cells, as well as to apoptotic blebs and to necrotic cells, but not to early apoptotic cells, facilitating their uptake by macrophages. May bind DNA. Upon SARS coronavirus-2/SARS-CoV-2 infection, activates the complement lectin pathway which leads to the inhibition SARS-CoV-2 infection and a reduction of the induced inflammatory response. This chain is Mannose-binding protein C, found in Homo sapiens (Human).